A 426-amino-acid chain; its full sequence is Protein PHOSPHATE STARVATION RESPONSE 2 (426 aa).

Disordered regions lie at residues 27 to 81 (ATLD…PLRS), 96 to 123 (YTNA…QYGG), and 198 to 247 (TQPQ…NSKT). Residues 69-81 (FQSSTGSVGPLRS) show a composition bias toward polar residues. 2 stretches are compositionally biased toward low complexity: residues 102–119 (YNSQ…NYGS) and 205–225 (AAQS…SSQS). Positions 237-246 (SGASNTSNSK) are enriched in polar residues. In terms of domain architecture, HTH myb-type spans 243–303 (SNSKTRMRWT…HLQKYRTARY (61 aa)). Residues 274–299 (PKGVLKLMKADNLTIYHVKSHLQKYR) constitute a DNA-binding region (H-T-H motif). Disordered stretches follow at residues 302-326 (RYRP…PSID) and 382-426 (DKAV…SGDR). The segment covering 303-322 (YRPELSEGSSEKKAASKEDI) has biased composition (basic and acidic residues). Composition is skewed to polar residues over residues 387–401 (ASTS…SDLP) and 411–426 (ENSQ…SGDR).

As to quaternary structure, interacts (via C-terminus) with SPX4 (via N-terminus) in the presence of inositol polyphosphate. Interacts (via C-terminus) with SPX1 and SPX2 (via SPX domain). Interacts with RLI1 in the nucleus.

It is found in the nucleus. The protein localises to the cytoplasm. Functionally, transcription factor involved in phosphate starvation signaling. Binds to P1BS, an imperfect palindromic sequence 5'-GNATATNC-3', to promote the expression of inorganic phosphate (Pi) starvation-responsive genes. Functionally redundant with PHR1 and PHR3 in regulating Pi starvation response and Pi homeostasis. Involved in both systematic and local Pi-signaling pathways. Regulates several Pi transporters. PHR2 binding to DNA is repressed redundantly by SPX1, SPX2 and SPX4 in a PI-dependent manner. The DNA-binding activity is also repressed by SPX4. Involved in root growth under Pi deprivation. Involved in the modulation of Pi response and homeostasis together with RLI1; promotes RLI1 expression in response to nitrate availability, thus triggering the nitrate-induced phosphate response (NIPR). The chain is Protein PHOSPHATE STARVATION RESPONSE 2 from Oryza sativa subsp. indica (Rice).